A 167-amino-acid polypeptide reads, in one-letter code: ATP synthase subunit b (167 aa).

A helical transmembrane segment spans residues 15–37 (FWQTVIFLVTLYLLSKFAWGPIM).

It belongs to the ATPase B chain family. In terms of assembly, F-type ATPases have 2 components, F(1) - the catalytic core - and F(0) - the membrane proton channel. F(1) has five subunits: alpha(3), beta(3), gamma(1), delta(1), epsilon(1). F(0) has three main subunits: a(1), b(2) and c(10-14). The alpha and beta chains form an alternating ring which encloses part of the gamma chain. F(1) is attached to F(0) by a central stalk formed by the gamma and epsilon chains, while a peripheral stalk is formed by the delta and b chains.

The protein resides in the cell inner membrane. Its function is as follows. F(1)F(0) ATP synthase produces ATP from ADP in the presence of a proton or sodium gradient. F-type ATPases consist of two structural domains, F(1) containing the extramembraneous catalytic core and F(0) containing the membrane proton channel, linked together by a central stalk and a peripheral stalk. During catalysis, ATP synthesis in the catalytic domain of F(1) is coupled via a rotary mechanism of the central stalk subunits to proton translocation. Functionally, component of the F(0) channel, it forms part of the peripheral stalk, linking F(1) to F(0). This chain is ATP synthase subunit b, found in Cytophaga hutchinsonii (strain ATCC 33406 / DSM 1761 / CIP 103989 / NBRC 15051 / NCIMB 9469 / D465).